The primary structure comprises 1522 residues: Rho guanine nucleotide exchange factor 11 (1522 aa).

Residues Met-1–Thr-40 are disordered. Residues Ser-2, Ser-14, Ser-16, and Ser-35 each carry the phosphoserine modification. The 80-residue stretch at Cys-47–Ser-126 folds into the PDZ domain. Disordered stretches follow at residues Gly-128–Gln-175 and Tyr-200–Pro-231. Residues Pro-149–Gln-161 are compositionally biased toward pro residues. Residues Ser-245 and Ser-251 each carry the phosphoserine modification. At Thr-254 the chain carries Phosphothreonine. Ser-255 and Ser-271 each carry phosphoserine. Residues Ala-263–Ser-286 are disordered. The 181-residue stretch at Glu-306–Arg-486 folds into the RGSL domain. Positions Leu-444 to Ala-470 form a coiled coil. Residues Ala-490–Leu-555 form a disordered region. A compositionally biased stretch (basic and acidic residues) spans Ser-521–Arg-533. Ser-556, Ser-635, and Ser-663 each carry phosphoserine. The disordered stretch occupies residues Glu-573–Ile-680. Residues Asp-601–Val-637 are compositionally biased toward basic and acidic residues. Positions Ser-651–Leu-664 are enriched in low complexity. Phosphothreonine is present on residues Thr-668 and Thr-672. The DH domain occupies Asp-734–Ala-923. Residues Lys-965 to Arg-1079 form the PH domain. Residues His-1084–Gly-1141 form a disordered region. Pro residues predominate over residues Pro-1091–Arg-1100. Over residues Val-1112–Pro-1124 the composition is skewed to basic and acidic residues. Ser-1155 is modified (phosphoserine). Disordered stretches follow at residues Glu-1223–Tyr-1320, Lys-1332–Gly-1423, and Leu-1453–Pro-1522. Over residues Pro-1236–Ser-1245 the composition is skewed to polar residues. A phosphoserine mark is found at Ser-1295 and Ser-1300. Positions Pro-1338–Gly-1353 are enriched in low complexity. Phosphoserine is present on residues Ser-1457 and Ser-1458. A phosphothreonine mark is found at Thr-1462 and Thr-1475. Ser-1480 carries the phosphoserine modification. Acidic residues predominate over residues Asp-1503–Thr-1513.

Interacts with GNA12 and GNA13 through the RGS domain. Interacts with RHOA, PLXNB1 and PLXNB2. Interacts with SLC1A6. Interacts (via DH domain) with GCSAM (via C-terminus). Found in a complex with ARHGEF11 and ARHGEF12; binding to ARHGEF11 and ARHGEF12 enhances CDC42 GEF activity of PLEKHG4B, and PLEKHG4B, in turn, inhibits ARHGEF11- and ARHGEF12-mediated RHOA activation. In terms of processing, phosphorylated by MAP kinase p38 (MAPK11, MAPK12, MAPK13 and/or MAPK14). Ubiquitinated by the BCR(KLHL20) E3 ubiquitin ligase complex when previously phosphorylated by MAP kinase p38 (MAPK11, MAPK12, MAPK13 and/or MAPK14), leading to its degradation, thereby restricting RhoA activity and facilitating growth cone spreading and neurite outgrowth. As to expression, ubiquitously expressed.

The protein localises to the cytoplasm. The protein resides in the membrane. May play a role in the regulation of RhoA GTPase by guanine nucleotide-binding alpha-12 (GNA12) and alpha-13 (GNA13). Acts as guanine nucleotide exchange factor (GEF) for RhoA GTPase and may act as GTPase-activating protein (GAP) for GNA12 and GNA13. Involved in neurotrophin-induced neurite outgrowth. The protein is Rho guanine nucleotide exchange factor 11 (ARHGEF11) of Homo sapiens (Human).